An 801-amino-acid chain; its full sequence is Glycerol-3-phosphate acyltransferase 2, mitochondrial (801 aa).

The interval 1–24 (MDTMLKSNPQTQQRSNHNGQETSL) is disordered. Residues 1–305 (MDTMLKSNPQ…PGPRLSALGQ (305 aa)) lie on the Cytoplasmic side of the membrane. The acyltransferase stretch occupies residues 180–290 (QLHKGQMKMV…SGQPLLIFLE (111 aa)). The HXXXXD motif signature appears at 205–210 (HKSLLD). A helical transmembrane segment spans residues 306-332 (AWLGVVIQAVQAGIISDATLVPVAIAY). Over 333-449 (DLVPDAPCNM…QLLVRRLSRH (117 aa)) the chain is Mitochondrial intermembrane. Residues 450-472 (VLSASVASSAVMSTAIMATLLLL) form a helical membrane-spanning segment. At 473–801 (KHQKGVVLSQ…EQFIRQFICS (329 aa)) the chain is on the cytoplasmic side. The residue at position 662 (serine 662) is a Phosphoserine. The residue at position 666 (threonine 666) is a Phosphothreonine. Residues serine 668 and serine 670 each carry the phosphoserine modification.

The protein belongs to the GPAT/DAPAT family. In terms of assembly, interacts with PIWIL2. As to expression, highly expressed in the testis. Expressed at lower levels in the heart, liver, kidney, spleen and adipose cells. Only detected in primary spermatocytes.

Its subcellular location is the mitochondrion outer membrane. It catalyses the reaction sn-glycerol 3-phosphate + an acyl-CoA = a 1-acyl-sn-glycero-3-phosphate + CoA. The catalysed reaction is a 1-acyl-sn-glycero-3-phosphate + an acyl-CoA = a 1,2-diacyl-sn-glycero-3-phosphate + CoA. The enzyme catalyses 1-(9Z-octadecenoyl)-sn-glycero-3-phosphate + (9Z)-octadecenoyl-CoA = 1,2-di-(9Z-octadecenoyl)-sn-glycero-3-phosphate + CoA. It carries out the reaction 1-(9Z-octadecenoyl)-sn-glycero-3-phosphate + (5Z,8Z,11Z,14Z)-eicosatetraenoyl-CoA = 1-(9Z)-octadecenoyl-2-(5Z,8Z,11Z,14Z)-eicosatetraenoyl-sn-glycero-3-phosphate + CoA. It catalyses the reaction (5Z,8Z,11Z,14Z)-eicosatetraenoyl-CoA + sn-glycerol 3-phosphate = 1-(5Z,8Z,11Z,14Z-eicosatetraenoyl)-sn-glycero-3-phosphate + CoA. Its pathway is phospholipid metabolism; CDP-diacylglycerol biosynthesis; CDP-diacylglycerol from sn-glycerol 3-phosphate: step 1/3. Its activity is regulated as follows. Inhibited by N-ethylmaleimide (NEM). Transfers an acyl-group from acyl-ACP to the sn-1 position of glycerol-3-phosphate producing a lysophosphatidic acid (LPA), an essential step for the triacylglycerol (TAG) and glycerophospholipids. In vitro also transfers an acyl-group from acyl-ACP to the LPA producing a phosphatidic acid (PA). Prefers arachidonoyl-CoA as the acyl donor. Required for primary processing step during piRNA biosynthesis. Molecular mechanisms by which it promotes piRNA biosynthesis are unclear and do not involve its acyltransferase activity. In Mus musculus (Mouse), this protein is Glycerol-3-phosphate acyltransferase 2, mitochondrial.